The chain runs to 406 residues: Eukaryotic initiation factor 4A-I (406 aa).

Residues 1-21 (MSASQDSRSRDNGPDGMEPEG) form a disordered region. Ser-2 is subject to N-acetylserine. Ser-4 is modified (phosphoserine). The Q motif signature appears at 32 to 60 (DSLDDMNLSESLLRGIYAYGFEKPSAIQQ). The region spanning 63–234 (ILSCIKGYDV…KKFMRDPIRI (172 aa)) is the Helicase ATP-binding domain. Residue 76–83 (AQSGTGKT) coordinates ATP. Lys-118 carries the post-translational modification N6-acetyllysine. Residue Lys-146 forms a Glycyl lysine isopeptide (Lys-Gly) (interchain with G-Cter in SUMO2) linkage. A Phosphothreonine modification is found at Thr-158. Lys-174 carries the post-translational modification N6-acetyllysine. The DEAD box motif lies at 182-185 (DEAD). Lys-193 carries the post-translational modification N6-acetyllysine. A Glycyl lysine isopeptide (Lys-Gly) (interchain with G-Cter in SUMO2) cross-link involves residue Lys-225. Lys-238 is subject to N6-acetyllysine; alternate. A Glycyl lysine isopeptide (Lys-Gly) (interchain with G-Cter in SUMO2); alternate cross-link involves residue Lys-238. A Helicase C-terminal domain is found at 245–406 (GIRQFYINVE…EMPLNVADLI (162 aa)). Glycyl lysine isopeptide (Lys-Gly) (interchain with G-Cter in SUMO2) cross-links involve residues Lys-309, Lys-369, and Lys-381.

Belongs to the DEAD box helicase family. eIF4A subfamily. In terms of assembly, eIF4F is a multi-subunit complex, the composition of which varies with external and internal environmental conditions. It is composed of at least EIF4A, EIF4E and EIF4G1/EIF4G3. Interacts with PAIP1, EIF4E and UPF2. Found in a complex with XPO7, EIF4A1, ARHGAP1, VPS26A, VPS29, VPS35 and SFN. May interact with NOM1. Interacts with PDCD4; this interferes with the interaction between EIF4A and EIF4G. Interacts with RBM4. Interacts with DDX3X in an RNA-independent manner. Interacts with PKP1 (via N-terminus); the interaction promotes EIF4A1 recruitment to the cap-dependent translation complex and EIF4A1 ATPase activity.

The protein localises to the cytoplasm. Its subcellular location is the perinuclear region. The protein resides in the cell membrane. It localises to the stress granule. It carries out the reaction ATP + H2O = ADP + phosphate + H(+). ATP-dependent RNA helicase which is a subunit of the eIF4F complex involved in cap recognition and is required for mRNA binding to ribosome. In the current model of translation initiation, eIF4A unwinds RNA secondary structures in the 5'-UTR of mRNAs which is necessary to allow efficient binding of the small ribosomal subunit, and subsequent scanning for the initiator codon. As a result, promotes cell proliferation and growth. The chain is Eukaryotic initiation factor 4A-I (EIF4A1) from Pongo abelii (Sumatran orangutan).